A 231-amino-acid chain; its full sequence is Glycerol-3-phosphate acyltransferase (231 aa).

The next 6 helical transmembrane spans lie at 6–26 (FLFLFLFFYILGSIPTGLVIG), 55–75 (WGILVFLLDFCKGFVPLTIFL), 95–115 (LTMKISLLAISPILGHMFSLF), 130–150 (IITSFNPLIGISGIIFFAIFL), 152–172 (LFGYASLSSIMASTLVNIFLW), and 196–216 (LFYFSINFATLIIIAKHYSNI).

This sequence belongs to the PlsY family. Probably interacts with PlsX.

It localises to the cell membrane. It carries out the reaction an acyl phosphate + sn-glycerol 3-phosphate = a 1-acyl-sn-glycero-3-phosphate + phosphate. It functions in the pathway lipid metabolism; phospholipid metabolism. In terms of biological role, catalyzes the transfer of an acyl group from acyl-phosphate (acyl-PO(4)) to glycerol-3-phosphate (G3P) to form lysophosphatidic acid (LPA). This enzyme utilizes acyl-phosphate as fatty acyl donor, but not acyl-CoA or acyl-ACP. This chain is Glycerol-3-phosphate acyltransferase, found in Aster yellows witches'-broom phytoplasma (strain AYWB).